The sequence spans 131 residues: MTDPIADYLTRLRNAIGAKHRVVEVPASNLKKEITKILFEKGYILNYKFVEDGPQGTIKVALKYDSVNKVNAIKKLERVSSPGMRKYTGYKDMPRVINGLGIAIISTSKGVMTNKEAAELKIGGEVLCYVY.

The protein belongs to the universal ribosomal protein uS8 family. As to quaternary structure, part of the 30S ribosomal subunit. Contacts proteins S5 and S12.

Its function is as follows. One of the primary rRNA binding proteins, it binds directly to 16S rRNA central domain where it helps coordinate assembly of the platform of the 30S subunit. This Bacteroides thetaiotaomicron (strain ATCC 29148 / DSM 2079 / JCM 5827 / CCUG 10774 / NCTC 10582 / VPI-5482 / E50) protein is Small ribosomal subunit protein uS8.